The primary structure comprises 386 residues: mRNA-capping enzyme subunit beta (386 aa).

The tract at residues 1–137 (MDIGKMINDD…TTTITGCPPS (137 aa)) is disordered. Composition is skewed to polar residues over residues 20 to 32 (VKSLLNSPPTGLP) and 41 to 56 (KASSTSDLAQQLTNEM). Residues 57-67 (ESGEDDDDEDA) show a composition bias toward acidic residues. Basic and acidic residues predominate over residues 93 to 115 (RHAERDHRPPPHRQDRRDPRMER).

The protein belongs to the fungal TPase family. In terms of assembly, heterodimer. The mRNA-capping enzyme is composed of two separate chains alpha and beta, respectively a mRNA guanylyltransferase and an mRNA 5'-triphosphate monophosphatase. It depends on Mg(2+) as a cofactor.

It localises to the nucleus. The enzyme catalyses a 5'-end triphospho-ribonucleoside in mRNA + H2O = a 5'-end diphospho-ribonucleoside in mRNA + phosphate + H(+). In terms of biological role, first step of mRNA capping. Converts the 5'-triphosphate end of a nascent mRNA chain into a diphosphate end. The polypeptide is mRNA-capping enzyme subunit beta (CET1) (Yarrowia lipolytica (strain CLIB 122 / E 150) (Yeast)).